We begin with the raw amino-acid sequence, 420 residues long: Glycogen synthase kinase-3 beta (420 aa).

The segment covering 1–22 (MSGRPRTTSFAESCKPVQQPSA) has biased composition (polar residues). Residues 1-53 (MSGRPRTTSFAESCKPVQQPSAFGSMKVSRDKDGSKVTTVVATPGQGPDRPQE) are disordered. A Phosphoserine; by PKB/AKT1, RPS6KA3 and SGK3 modification is found at serine 9. A lipid anchor (S-palmitoyl cysteine) is attached at cysteine 14. The 285-residue stretch at 56 to 340 (YTDTKVIGNG…PLEACAHSFF (285 aa)) folds into the Protein kinase domain. Residues 62-70 (IGNGSFGVV) and lysine 85 contribute to the ATP site. Residue aspartate 181 is the Proton acceptor of the active site. Residue tyrosine 216 is modified to Phosphotyrosine. Residues 386–401 (AAASTPTNATAASDAN) show a composition bias toward low complexity. Residues 386-420 (AAASTPTNATAASDANTGDRGQTNNAASASASNST) form a disordered region. Phosphoserine is present on serine 389. Residues threonine 390 and threonine 402 each carry the phosphothreonine modification. Positions 409 to 420 (NNAASASASNST) are enriched in low complexity.

The protein belongs to the protein kinase superfamily. CMGC Ser/Thr protein kinase family. GSK-3 subfamily. As to quaternary structure, monomer. Interacts with ARRB2, DISC1 and ZBED3. Interacts with CABYR, MMP2, MUC1, NIN and PRUNE1. Interacts with AXIN1; the interaction mediates hyperphosphorylation of CTNNB1 leading to its ubiquitination and destruction. Interacts with and phosphorylates SNAI1. Interacts with DNM1L (via a C-terminal domain). Found in a complex composed of MACF1, APC, AXIN1, CTNNB1 and GSK3B. Interacts with SGK3. Interacts with DAB2IP (via C2 domain); the interaction stimulates GSK3B kinase activation. Interacts (via C2 domain) with PPP2CA. Interacts with the CLOCK-BMAL1 heterodimer. Interacts with the BMAL1. Interacts with CTNND2. Interacts with NCYM. The complex composed, at least, of APC, CTNNB1 and GSK3B interacts with JPT1; the interaction requires the inactive form of GSK3B (phosphorylated at 'Ser-9'). Forms a complex composed of PRKAR2A or PRKAR2B, GSK3B and GSKIP through GSKIP interaction; facilitates PKA-induced phosphorylation and regulates GSK3B activity. Interacts with GSKIP. Interacts with GID8. Interacts with PIWIL2. Interacts with LMBR1L. Interacts with DDX3X. Interacts with BIRC2. Interacts with TNFRSF10B; TNFRSF10B stimulation inhibits GSK3B kinase activity. Interacts with RICTOR; the interaction results in phosphorylation of RICTOR at 'Thr-1695' by GSK3B which facilitates FBXW7-mediated ubiquitination and subsequent degradation of RICTOR. Found in a complex with SLC39A6, SLC39A10 and with GSK3B that controls NCAM1 phosphorylation. Interacts with PKP3 (via ARM repeats); the interaction may be involved in PKP3 protein degradation. Post-translationally, phosphorylated by AKT1 and ILK1. Upon insulin-mediated signaling, the activated PKB/AKT1 protein kinase phosphorylates and deactivates GSK3B, resulting in the dephosphorylation and activation of GYS1. Activated by phosphorylation at Tyr-216. Inactivated by phosphorylation at Ser-9. Phosphorylated in a circadian manner in the hippocampus. In terms of processing, mono-ADP-ribosylation by PARP10 negatively regulates kinase activity. Palmitoylated. Palmitoylation by ZDHHC4 prevents AKT1-mediated phosphorylation. In terms of tissue distribution, expressed in testis, thymus, prostate and ovary and weakly expressed in lung, brain and kidney. Colocalizes with EIF2AK2/PKR and TAU in the Alzheimer disease (AD) brain.

It localises to the cytoplasm. Its subcellular location is the nucleus. The protein localises to the cell membrane. It carries out the reaction L-seryl-[tau protein] + ATP = O-phospho-L-seryl-[tau protein] + ADP + H(+). The catalysed reaction is L-threonyl-[tau protein] + ATP = O-phospho-L-threonyl-[tau protein] + ADP + H(+). The enzyme catalyses L-seryl-[protein] + ATP = O-phospho-L-seryl-[protein] + ADP + H(+). It catalyses the reaction L-threonyl-[protein] + ATP = O-phospho-L-threonyl-[protein] + ADP + H(+). Activated by phosphorylation at Tyr-216. In response to insulin, inhibited by phosphorylation at Ser-9 by PKB/AKT1 and RPS6KA3; phosphorylation at this site causes a conformational change, preventing access of substrates to the active site. Inhibited by IL22 treatment which also triggers phosphorylation at Ser-9, promoting inactivation. Inhibited by lithium. In terms of biological role, constitutively active protein kinase that acts as a negative regulator in the hormonal control of glucose homeostasis, Wnt signaling and regulation of transcription factors and microtubules, by phosphorylating and inactivating glycogen synthase (GYS1 or GYS2), EIF2B, CTNNB1/beta-catenin, APC, AXIN1, DPYSL2/CRMP2, JUN, NFATC1/NFATC, MAPT/TAU and MACF1. Requires primed phosphorylation of the majority of its substrates. In skeletal muscle, contributes to insulin regulation of glycogen synthesis by phosphorylating and inhibiting GYS1 activity and hence glycogen synthesis. May also mediate the development of insulin resistance by regulating activation of transcription factors. Regulates protein synthesis by controlling the activity of initiation factor 2B (EIF2BE/EIF2B5) in the same manner as glycogen synthase. In Wnt signaling, GSK3B forms a multimeric complex with APC, AXIN1 and CTNNB1/beta-catenin and phosphorylates the N-terminus of CTNNB1 leading to its degradation mediated by ubiquitin/proteasomes. Phosphorylates JUN at sites proximal to its DNA-binding domain, thereby reducing its affinity for DNA. Phosphorylates NFATC1/NFATC on conserved serine residues promoting NFATC1/NFATC nuclear export, shutting off NFATC1/NFATC gene regulation, and thereby opposing the action of calcineurin. Phosphorylates MAPT/TAU on 'Thr-548', decreasing significantly MAPT/TAU ability to bind and stabilize microtubules. MAPT/TAU is the principal component of neurofibrillary tangles in Alzheimer disease. Plays an important role in ERBB2-dependent stabilization of microtubules at the cell cortex. Phosphorylates MACF1, inhibiting its binding to microtubules which is critical for its role in bulge stem cell migration and skin wound repair. Probably regulates NF-kappa-B (NFKB1) at the transcriptional level and is required for the NF-kappa-B-mediated anti-apoptotic response to TNF-alpha (TNF/TNFA). Negatively regulates replication in pancreatic beta-cells, resulting in apoptosis, loss of beta-cells and diabetes. Through phosphorylation of the anti-apoptotic protein MCL1, may control cell apoptosis in response to growth factors deprivation. Phosphorylates MUC1 in breast cancer cells, decreasing the interaction of MUC1 with CTNNB1/beta-catenin. Is necessary for the establishment of neuronal polarity and axon outgrowth. Phosphorylates MARK2, leading to inhibition of its activity. Phosphorylates SIK1 at 'Thr-182', leading to sustainment of its activity. Phosphorylates ZC3HAV1 which enhances its antiviral activity. Phosphorylates SNAI1, leading to its ubiquitination and proteasomal degradation. Phosphorylates SFPQ at 'Thr-687' upon T-cell activation. Phosphorylates NR1D1 st 'Ser-55' and 'Ser-59' and stabilizes it by protecting it from proteasomal degradation. Regulates the circadian clock via phosphorylation of the major clock components including BMAL1, CLOCK and PER2. Phosphorylates FBXL2 at 'Thr-404' and primes it for ubiquitination by the SCF(FBXO3) complex and proteasomal degradation. Phosphorylates CLOCK AT 'Ser-427' and targets it for proteasomal degradation. Phosphorylates BMAL1 at 'Ser-17' and 'Ser-21' and primes it for ubiquitination and proteasomal degradation. Phosphorylates OGT at 'Ser-3' or 'Ser-4' which positively regulates its activity. Phosphorylates MYCN in neuroblastoma cells which may promote its degradation. Regulates the circadian rhythmicity of hippocampal long-term potentiation and BMAL1 and PER2 expression. Acts as a regulator of autophagy by mediating phosphorylation of KAT5/TIP60 under starvation conditions, activating KAT5/TIP60 acetyltransferase activity and promoting acetylation of key autophagy regulators, such as ULK1 and RUBCNL/Pacer. Negatively regulates extrinsic apoptotic signaling pathway via death domain receptors. Promotes the formation of an anti-apoptotic complex, made of DDX3X, BRIC2 and GSK3B, at death receptors, including TNFRSF10B. The anti-apoptotic function is most effective with weak apoptotic signals and can be overcome by stronger stimulation. Phosphorylates E2F1, promoting the interaction between E2F1 and USP11, stabilizing E2F1 and promoting its activity. Phosphorylates mTORC2 complex component RICTOR at 'Ser-1235' in response to endoplasmic stress, inhibiting mTORC2. Phosphorylates mTORC2 complex component RICTOR at 'Thr-1695' which facilitates FBXW7-mediated ubiquitination and subsequent degradation of RICTOR. Phosphorylates FXR1, promoting FXR1 ubiquitination by the SCF(FBXO4) complex and FXR1 degradation by the proteasome. Phosphorylates interleukin-22 receptor subunit IL22RA1, preventing its proteasomal degradation. In Homo sapiens (Human), this protein is Glycogen synthase kinase-3 beta.